A 524-amino-acid chain; its full sequence is Cytochrome P450 704B1 (524 aa).

Residues 2-22 form a helical membrane-spanning segment; sequence SLCLVIACMVTSWIFLHRWGQ. Residue Cys471 participates in heme binding.

It belongs to the cytochrome P450 family. Heme serves as cofactor.

The protein localises to the membrane. The enzyme catalyses an omega-methyl-long-chain fatty acid + reduced [NADPH--hemoprotein reductase] + O2 = an omega-hydroxy-long-chain fatty acid + oxidized [NADPH--hemoprotein reductase] + H2O + H(+). Functionally, involved in pollen wall development. Catalyzes the conversion of long-chain fatty acids to the corresponding omega-hydroxylated fatty acids. Omega-hydroxylated fatty acids, together with in-chain hydroxylated fatty acids, are key monomeric aliphatic building blocks for sporopollenin synthesis during exine formation. This is Cytochrome P450 704B1 (CYP704B1) from Arabidopsis thaliana (Mouse-ear cress).